We begin with the raw amino-acid sequence, 327 residues long: MAAAAAAAAATNGTGGSSGMEVDAAVVPSVMACGVTGSVSVALHPLVILNISDHWIRMRSQEGRPVQVIGALIGKQEGRNIEVMNSFELLSHTVEEKIIIDKEYYYTKEEQFKQVFKELEFLGWYTTGGPPDPSDIHVHKQVCEIIESPLFLKLNPMTKHTDLPVSVFESVIDIINGEATMLFAELTYTLATEEAERIGVDHVARMTATGSGENSTVAEHLIAQHSAIKMLHSRVKLILEYVKASEAGEVPFNHEILREAYALCHCLPVLSTDKFKTDFYDQCNDVGLMAYLGTITKTCNTMNQFVNKFNVLYDRQGIGRRMRGLFF.

Residues Val-41 to Ile-174 enclose the MPN domain. The interval Ser-211–Phe-327 is interaction with Vpr.

This sequence belongs to the peptidase M67A family. CSN6 subfamily. In terms of assembly, component of the CSN complex, composed of COPS1/GPS1, COPS2, COPS3, COPS4, COPS5, COPS6, COPS7 (COPS7A or COPS7B), COPS8 and COPS9 isoform 1. In the complex, it probably interacts directly with COPS2, COPS4, COPS5, COPS7 (COPS7A or COPS7B) and COPS9 isoform 1. Interacts with the translation initiation factor EIF3S6. Interacts weakly with RBX1. Directly interacts with COP1 and 14-3-3 protein sigma/SFN. Interacts with ERCC6. As to quaternary structure, (Microbial infection) Interacts with the HIV-1 protein Vpr. Widely expressed.

The protein localises to the nucleus. The protein resides in the cytoplasm. It localises to the perinuclear region. Component of the COP9 signalosome complex (CSN), a complex involved in various cellular and developmental processes. The CSN complex is an essential regulator of the ubiquitin (Ubl) conjugation pathway by mediating the deneddylation of the cullin subunits of SCF-type E3 ligase complexes, leading to decrease the Ubl ligase activity of SCF-type complexes such as SCF, CSA or DDB2. The complex is also involved in phosphorylation of p53/TP53, c-jun/JUN, IkappaBalpha/NFKBIA, ITPK1 and IRF8, possibly via its association with CK2 and PKD kinases. CSN-dependent phosphorylation of TP53 and JUN promotes and protects degradation by the Ubl system, respectively. Has some glucocorticoid receptor-responsive activity. Stabilizes COP1 through reducing COP1 auto-ubiquitination and decelerating COP1 turnover rate, hence regulates the ubiquitination of COP1 targets. This chain is COP9 signalosome complex subunit 6 (COPS6), found in Homo sapiens (Human).